The sequence spans 318 residues: Formimidoylglutamase (318 aa).

Positions 130, 155, 157, 159, 246, and 248 each coordinate Mn(2+).

Belongs to the arginase family. Requires Mn(2+) as cofactor.

It catalyses the reaction N-formimidoyl-L-glutamate + H2O = formamide + L-glutamate. Its pathway is amino-acid degradation; L-histidine degradation into L-glutamate; L-glutamate from N-formimidoyl-L-glutamate (hydrolase route): step 1/1. Functionally, catalyzes the conversion of N-formimidoyl-L-glutamate to L-glutamate and formamide. The sequence is that of Formimidoylglutamase from Photorhabdus laumondii subsp. laumondii (strain DSM 15139 / CIP 105565 / TT01) (Photorhabdus luminescens subsp. laumondii).